Consider the following 333-residue polypeptide: Outer membrane protein assembly factor BamC (333 aa).

Positions Met-1–Gly-18 are cleaved as a signal peptide. Residue Cys-19 is the site of N-palmitoyl cysteine attachment. The S-diacylglycerol cysteine moiety is linked to residue Cys-19.

Belongs to the BamC family. As to quaternary structure, part of the Bam complex.

It localises to the cell outer membrane. Part of the outer membrane protein assembly complex, which is involved in assembly and insertion of beta-barrel proteins into the outer membrane. This Actinobacillus succinogenes (strain ATCC 55618 / DSM 22257 / CCUG 43843 / 130Z) protein is Outer membrane protein assembly factor BamC.